A 692-amino-acid chain; its full sequence is Elongation factor G (692 aa).

The tr-type G domain maps to 8–283 (QDLRNIGIVA…AVVDYLPSPL (276 aa)). GTP contacts are provided by residues 17–24 (AHIDAGKT), 81–85 (DTPGH), and 135–138 (NKLD).

This sequence belongs to the TRAFAC class translation factor GTPase superfamily. Classic translation factor GTPase family. EF-G/EF-2 subfamily.

Its subcellular location is the cytoplasm. In terms of biological role, catalyzes the GTP-dependent ribosomal translocation step during translation elongation. During this step, the ribosome changes from the pre-translocational (PRE) to the post-translocational (POST) state as the newly formed A-site-bound peptidyl-tRNA and P-site-bound deacylated tRNA move to the P and E sites, respectively. Catalyzes the coordinated movement of the two tRNA molecules, the mRNA and conformational changes in the ribosome. This Hydrogenobaculum sp. (strain Y04AAS1) protein is Elongation factor G.